We begin with the raw amino-acid sequence, 262 residues long: UPF0619 GPI-anchored membrane protein C1322.10 (262 aa).

The signal sequence occupies residues 1–20 (MLARVGTTLFFLANALAAYA). Disordered stretches follow at residues 136–165 (STSA…SSST) and 175–194 (ISSS…SGSI). Asparagine 207 and asparagine 227 each carry an N-linked (GlcNAc...) asparagine glycan. Asparagine 242 carries the GPI-like-anchor amidated asparagine lipid modification. Residues 243–262 (GVAQLSVAACMGIAALMLIA) constitute a propeptide, removed in mature form.

It belongs to the UPF0619 family.

Its subcellular location is the golgi apparatus membrane. The protein localises to the cell membrane. This Schizosaccharomyces pombe (strain 972 / ATCC 24843) (Fission yeast) protein is UPF0619 GPI-anchored membrane protein C1322.10.